The primary structure comprises 376 residues: Histidinol dehydrogenase (376 aa).

The NAD(+) site is built by Y100 and N182. Residues S205, Q227, and H230 each contribute to the substrate site. Zn(2+) is bound by residues Q227 and H230. Active-site proton acceptor residues include E275 and H276. 4 residues coordinate substrate: H276, D309, E363, and H368. D309 contributes to the Zn(2+) binding site. H368 lines the Zn(2+) pocket.

It belongs to the histidinol dehydrogenase family. Requires Zn(2+) as cofactor.

It catalyses the reaction L-histidinol + 2 NAD(+) + H2O = L-histidine + 2 NADH + 3 H(+). Its pathway is amino-acid biosynthesis; L-histidine biosynthesis; L-histidine from 5-phospho-alpha-D-ribose 1-diphosphate: step 9/9. In terms of biological role, catalyzes the sequential NAD-dependent oxidations of L-histidinol to L-histidinaldehyde and then to L-histidine. The chain is Histidinol dehydrogenase from Thermococcus kodakarensis (strain ATCC BAA-918 / JCM 12380 / KOD1) (Pyrococcus kodakaraensis (strain KOD1)).